The sequence spans 116 residues: Large ribosomal subunit protein uL18 (116 aa).

The protein belongs to the universal ribosomal protein uL18 family. As to quaternary structure, part of the 50S ribosomal subunit; part of the 5S rRNA/L5/L18/L25 subcomplex. Contacts the 5S and 23S rRNAs.

Functionally, this is one of the proteins that bind and probably mediate the attachment of the 5S RNA into the large ribosomal subunit, where it forms part of the central protuberance. The protein is Large ribosomal subunit protein uL18 of Shewanella frigidimarina (strain NCIMB 400).